The following is a 1020-amino-acid chain: MSLNRQLLFTYYFIVSLILFSDFVSSATLPKEEVDALQSVATALKKSNWNFSVDPCDETLSEGGWRNPNAAKGFEDAVTCNCSSVICHVTNIVLKAQDLQGSLPTDLSGLPFLQELDLTRNYLNGSIPPEWGASSLLNISLLGNRISGSIPKELGNLTTLSGLVLEYNQLSGKIPPELGNLPNLKRLLLSSNNLSGEIPSTFAKLTTLTDLRISDNQFTGAIPDFIQNWKGLEKLVIQASGLVGPIPSAIGLLGTLTDLRITDLSGPESPFPPLRNMTSMKYLILRNCNLTGDLPAYLGQNRKLKNLDLSFNKLSGPIPATYSGLSDVDFIYFTSNMLNGQVPSWMVDQGDTIDITYNNFSKDKTEECQQKSVNTFSSTSPLVANNSSNVSCLSKYTCPKTFYGLHINCGGNEITSNETKYDADTWDTPGYYDSKNGWVSSNTGNFLDDDRTNNGKSKWSNSSELKITNSSIDFRLYTQARLSAISLTYQALCLGKGNYTVNLHFAEIMFNEKNMYSNLGRRYFDIYVQGKREVKDFNIVDEAKGVGKAVVKKFPVMVTNGKLEIRLQWAGKGTQAIPVRGVYGPLISAVSVDPDFIPPKEPGTGTGGGSSVGTVVGSVIASTVFLVLLIGGILWWRGCLRPKSQMEKDFKNLDFQISSFSLRQIKVATDNFDPANKIGEGGFGPVHKGIMTDGTVIAVKQLSAKSKQGNREFLNEIAMISALQHPHLVKLYGCCVEGDQLLLVYEYLENNSLARALFGPQETQIPLNWPMRQKICVGIARGLAYLHEESRLKIVHRDIKATNVLLDKELNPKISDFGLAKLDEEENTHISTRVAGTYGYMAPEYAMRGHLTDKADVYSFGVVALEIVHGKSNTSSRSKADTFYLLDWVHVLREQNTLLEVVDPRLGTDYNKQEALMMIQIGMLCTSPAPGDRPSMSTVVSMLEGHSTVNVEKLLEASVNNEKDEESVRAMKRHYATIGEEEITNTTTTDGPFTSSSTSTANANDLYPVKLDSAYWNTRT.

An N-terminal signal peptide occupies residues Met1 to Ser26. Residues Ala27–Thr614 are Extracellular-facing. N-linked (GlcNAc...) asparagine glycans are attached at residues Asn50 and Asn81. 10 LRR repeats span residues Ile86–Leu110, Pro111–Ser134, Leu136–Leu157, Thr158–Leu181, Pro182–Lys204, Thr206–Gly231, Leu253–Asn276, Met277–Asn301, Arg302–Gly324, and Ser326–Gln349. Residues Asn124, Asn138, and Asn156 are each glycosylated (N-linked (GlcNAc...) asparagine). Asn193 carries N-linked (GlcNAc...) asparagine glycosylation. N-linked (GlcNAc...) asparagine glycosylation is found at Asn276 and Asn289. Asn359, Asn386, Asn389, Asn417, Asn461, Asn469, and Asn498 each carry an N-linked (GlcNAc...) asparagine glycan. One copy of the LRR 11 repeat lies at Gln479–Val501. Residues Val615–Trp635 form a helical membrane-spanning segment. At Trp636–Thr1020 the chain is on the cytoplasmic side. The 278-residue stretch at Phe672–Val949 folds into the Protein kinase domain. ATP-binding positions include Ile678–Val686 and Lys700. Position 745 is a phosphotyrosine (Tyr745). Asp798 acts as the Proton acceptor in catalysis. The residue at position 831 (Ser831) is a Phosphoserine. Phosphothreonine is present on residues Thr832 and Thr837. Tyr845 is modified (phosphotyrosine).

The protein belongs to the protein kinase superfamily. Ser/Thr protein kinase family.

The protein resides in the cell membrane. The catalysed reaction is L-seryl-[protein] + ATP = O-phospho-L-seryl-[protein] + ADP + H(+). The enzyme catalyses L-threonyl-[protein] + ATP = O-phospho-L-threonyl-[protein] + ADP + H(+). The chain is Probable leucine-rich repeat receptor-like serine/threonine-protein kinase At3g14840 (LRR-RLK) from Arabidopsis thaliana (Mouse-ear cress).